A 352-amino-acid polypeptide reads, in one-letter code: Putative squamosa promoter-binding-like protein 19 (352 aa).

The tract at residues 68–88 (AAAPATRRARGGSGGGGGGGG) is disordered. Over residues 78-88 (GGSGGGGGGGG) the composition is skewed to gly residues. The segment at 90–167 (AEACSVDGCR…DGHNRRRRKP (78 aa)) adopts an SBP-type zinc-finger fold. Zn(2+) is bound by residues Cys93, Cys98, Cys115, His118, Cys134, Cys137, His141, and Cys153. Residues 150 to 166 (KKSCRKRLDGHNRRRRK) carry the Bipartite nuclear localization signal motif. The tract at residues 152-174 (SCRKRLDGHNRRRRKPQHDALNP) is disordered.

The protein localises to the nucleus. Its function is as follows. Trans-acting factor that binds specifically to the consensus nucleotide sequence 5'-TNCGTACAA-3'. This Oryza sativa subsp. japonica (Rice) protein is Putative squamosa promoter-binding-like protein 19 (SPL19).